The primary structure comprises 254 residues: Molybdate-binding protein ModA (254 aa).

A signal peptide spans 1-24 (MKKLTKISTALLIAGLGFSFAASA). Molybdate is bound by residues Ser33, Ser61, Ala146, Val173, and Tyr191.

Belongs to the bacterial solute-binding protein ModA family. In terms of assembly, the complex is composed of two ATP-binding proteins (ModC), two transmembrane proteins (ModB) and a solute-binding protein (ModA).

The protein localises to the periplasm. In terms of biological role, involved in the transport of molybdenum into the cell. In Haemophilus influenzae (strain ATCC 51907 / DSM 11121 / KW20 / Rd), this protein is Molybdate-binding protein ModA (modA).